We begin with the raw amino-acid sequence, 203 residues long: Sporulation delaying protein C (203 aa).

The signal sequence occupies residues 1–32 (MKSKLLRLLIVSMVTILVFSLVGLSKESSTSA). Positions 33 to 140 (KENHTFSGED…KYSSNKVTPS (108 aa)) are cleaved as a propeptide — removed in mature form. Cys141 and Cys147 are joined by a disulfide. Positions 183–203 (SASNNSDLEAAAAKTLKLIHQ) are cleaved as a propeptide — removed in mature form.

In terms of assembly, proprotein probably interacts with chaperone CsaA. In terms of processing, production of active SDP (able to induce SdpI and kill cells) is a multi-step process that requires signal peptide cleavage (probably by SipS or SipT) as well as SdpA and SdpB. The disulfide bond is not required for maximum toxicity.

The protein localises to the secreted. Produces a 42-residue extracellular sporulation delaying protein (SDP) that collapses the proton motive force (probably both the membrane potential and pH gradient) across the cell membrane, which leads to autolysis; may form a proton channel. Induces the lysis of other B.subtilis cells that have not entered the sporulation pathway, inducing cannibalism to provide a source of nutrients to support sporulation, and at the same time delaying commitment to the energetically expensive and irreversible onset of sporulation. Addition of SDP to liquid cultures halts growth, leads to increased cell permeability and eventually cell lysis in a significant subset of the population, although some cells survive and resume growth after a lag period. Effects of SDP are irreversible within 10 minutes. Addition of SDP to solid cultures induces killing, it is much more effective than SKF (AC O31422). Has antibiotic action against Gram-positive Firmicutes (L.acidophilus, M.megaterium, P.polymyxa, S.aureus, S.epidermidis) but not Actinobacteria M.luteus or Gram-negative P.aeruginosa or K.pneumoniae. SDP induces expression of the sdpR-sdpI operon. Its maturation is dependent on SdpA and SdpB. Also functions as a ligand, binds to SdpI triggering a signal transduction cascade that protects the cell against the toxic effects of its own SDP. This Bacillus subtilis (strain 168) protein is Sporulation delaying protein C.